Consider the following 705-residue polypeptide: Variediene synthase (705 aa).

A terpene cyclase region spans residues 9-331; that stretch reads LNSTLSSVVE…RCPRYHPWLC (323 aa). D100 is a Mg(2+) binding site. Substrate contacts are provided by residues D100, 186-189, N230, 234-238, and 325-326; these read RIID, SFDIE, and RY. The DDXXD 1 signature appears at 100–104; that stretch reads DNVVE. Residues 230–238 carry the NSE/DTE motif; sequence NDYFSFDIE. The segment at 332–705 is prenyltransferase; it reads KEAASLLHQD…VRLLIHRLKV (374 aa). Residues 349–366 show a composition bias toward basic and acidic residues; the sequence is GRKPQALEEYRSRSHSES. The segment at 349–374 is disordered; that stretch reads GRKPQALEEYRSRSHSESDLSDASPT. Residues K424, R427, and H456 each contribute to the isopentenyl diphosphate site. The Mg(2+) site is built by D463 and D467. A DDXXD 2 motif is present at residues 463–467; the sequence is DDIED. R472 contributes to the dimethylallyl diphosphate binding site. R473 is a binding site for isopentenyl diphosphate. The dimethylallyl diphosphate site is built by K550, T551, Q589, N596, K605, and K615.

The protein in the N-terminal section; belongs to the terpene synthase family. It in the C-terminal section; belongs to the FPP/GGPP synthase family. As to quaternary structure, hexamer. Requires Mg(2+) as cofactor.

The enzyme catalyses isopentenyl diphosphate + (2E,6E)-farnesyl diphosphate = (2E,6E,10E)-geranylgeranyl diphosphate + diphosphate. It carries out the reaction isopentenyl diphosphate + (2E,6E,10E)-geranylgeranyl diphosphate = (2E,6E,10E,14E)-geranylfarnesyl diphosphate + diphosphate. The catalysed reaction is (2E,6E,10E)-geranylgeranyl diphosphate = variediene + diphosphate. It catalyses the reaction (2E,6E,10E,14E)-geranylfarnesyl diphosphate = (R,2E)-alpha-cericerene + diphosphate. It participates in secondary metabolite biosynthesis; terpenoid biosynthesis. In terms of biological role, bifunctional terpene synthase that converts dimethylallyl diphosphate (DMAPP) and isopentenyl diphosphate (IPP) into variediene as a single product. The C-terminal prenyltransferase (PT) domain of EvVS catalyzes formation of geranylgeranyl pyrophosphate (GGPP), whereas the N-terminal terpene cyclase (TC) domain catalyzes the cyclization of GGPP to variediene. The PT domain can also synthesize geranylfarnesyl pyrophosphate (GFPP) from the C5 isoprene units in vitro, while the TC domain is able to cyclize GFPP to the sesterterpene (2E)-alpha-cericerene. The protein is Variediene synthase of Emericella variicolor (Aspergillus stellatus).